We begin with the raw amino-acid sequence, 258 residues long: Acetylglutamate kinase (258 aa).

Residues 41–42 (GG), arginine 63, and asparagine 156 contribute to the substrate site.

It belongs to the acetylglutamate kinase family. ArgB subfamily.

The protein resides in the cytoplasm. It catalyses the reaction N-acetyl-L-glutamate + ATP = N-acetyl-L-glutamyl 5-phosphate + ADP. The protein operates within amino-acid biosynthesis; L-arginine biosynthesis; N(2)-acetyl-L-ornithine from L-glutamate: step 2/4. Catalyzes the ATP-dependent phosphorylation of N-acetyl-L-glutamate. The sequence is that of Acetylglutamate kinase from Bacillus pumilus (strain SAFR-032).